Consider the following 510-residue polypeptide: Protein phosphatase 1H (510 aa).

The region spanning 73–503 (STGYAEVINA…DDISVYVIPL (431 aa)) is the PPM-type phosphatase domain. Disordered stretches follow at residues 105–128 (VQSTPNKNSSSKRRSSLPNAEGLQ) and 188–225 (LGEEPESTSSNSRTLTRAASLRGGSGAPGSPSTPPTRF).

It belongs to the PP2C family.

The protein localises to the nucleus. It is found in the cytoplasm. It carries out the reaction O-phospho-L-seryl-[protein] + H2O = L-seryl-[protein] + phosphate. The catalysed reaction is O-phospho-L-threonyl-[protein] + H2O = L-threonyl-[protein] + phosphate. The protein is Protein phosphatase 1H (ppm1h) of Xenopus tropicalis (Western clawed frog).